A 315-amino-acid polypeptide reads, in one-letter code: Beta-ketoacyl-[acyl-carrier-protein] synthase III (315 aa).

Catalysis depends on residues Cys-115 and His-244. The ACP-binding stretch occupies residues 245-249; sequence QANAR. The active site involves Asn-274.

Belongs to the thiolase-like superfamily. FabH family. In terms of assembly, homodimer.

The protein localises to the cytoplasm. It carries out the reaction malonyl-[ACP] + acetyl-CoA + H(+) = 3-oxobutanoyl-[ACP] + CO2 + CoA. It functions in the pathway lipid metabolism; fatty acid biosynthesis. Its function is as follows. Catalyzes the condensation reaction of fatty acid synthesis by the addition to an acyl acceptor of two carbons from malonyl-ACP. Catalyzes the first condensation reaction which initiates fatty acid synthesis and may therefore play a role in governing the total rate of fatty acid production. Possesses both acetoacetyl-ACP synthase and acetyl transacylase activities. Its substrate specificity determines the biosynthesis of branched-chain and/or straight-chain of fatty acids. In Rubrobacter xylanophilus (strain DSM 9941 / JCM 11954 / NBRC 16129 / PRD-1), this protein is Beta-ketoacyl-[acyl-carrier-protein] synthase III.